Reading from the N-terminus, the 147-residue chain is Bis(5'-nucleosyl)-tetraphosphatase [asymmetrical] (147 aa).

Ala-2 bears the N-acetylalanine mark. One can recognise a Nudix hydrolase domain in the interval 2 to 139 (ALRACGLIIF…EMKAALQEGH (138 aa)). Positions 43–64 (GHVEPGESDLETALRETQEEAG) match the Nudix box motif.

This sequence belongs to the Nudix hydrolase family. A divalent metal cation serves as cofactor.

It catalyses the reaction P(1),P(4)-bis(5'-guanosyl) tetraphosphate + H2O = GMP + GTP + 2 H(+). The catalysed reaction is a 5'-end CoA-ribonucleoside in mRNA + H2O = a 5'-end phospho-adenosine-phospho-ribonucleoside in mRNA + (R)-4'-phosphopantetheine + 2 H(+). The enzyme catalyses a 5'-end FAD-phospho-ribonucleoside in mRNA + H2O = a 5'-end phospho-adenosine-phospho-ribonucleoside in mRNA + FMN + 2 H(+). Its function is as follows. Catalyzes the asymmetric hydrolysis of diadenosine 5',5'''-P1,P4-tetraphosphate (Ap4A) to yield AMP and ATP. Exhibits decapping activity towards FAD-capped RNAs and dpCoA-capped RNAs in vitro. In Bos taurus (Bovine), this protein is Bis(5'-nucleosyl)-tetraphosphatase [asymmetrical] (NUDT2).